The sequence spans 245 residues: tRNA pseudouridine synthase A (245 aa).

The active-site Nucleophile is the Asp-52. Position 111 (Tyr-111) interacts with substrate.

Belongs to the tRNA pseudouridine synthase TruA family. Homodimer.

It catalyses the reaction uridine(38/39/40) in tRNA = pseudouridine(38/39/40) in tRNA. Formation of pseudouridine at positions 38, 39 and 40 in the anticodon stem and loop of transfer RNAs. This chain is tRNA pseudouridine synthase A, found in Rickettsia canadensis (strain McKiel).